We begin with the raw amino-acid sequence, 381 residues long: Molybdenum import ATP-binding protein ModC (381 aa).

The ABC transporter domain maps to 5 to 238 (SRSIQAQFRG…PALPLAASRD (234 aa)). 37 to 44 (GPSGCGKS) contacts ATP. The Mop domain maps to 297-367 (NTSILNVLPA…VKGVALAPGR (71 aa)).

It belongs to the ABC transporter superfamily. Molybdate importer (TC 3.A.1.8) family. In terms of assembly, the complex is composed of two ATP-binding proteins (ModC), two transmembrane proteins (ModB) and a solute-binding protein (ModA).

Its subcellular location is the cell inner membrane. It catalyses the reaction molybdate(out) + ATP + H2O = molybdate(in) + ADP + phosphate + H(+). Its function is as follows. Part of the ABC transporter complex ModABC involved in molybdenum import. Responsible for energy coupling to the transport system. The polypeptide is Molybdenum import ATP-binding protein ModC (Rhodopseudomonas palustris (strain BisB18)).